Reading from the N-terminus, the 440-residue chain is MPWPGRGHINPMLNLCKSLVRRDPNLTVTFVVTEEWLGFIGSDPKPNRIHFATLPNIIPSELVRANDFIAFIDAVLTRLEEPFEQLLDRLNSPPTAIIADTYIIWAVRVGTKRNIPVASFWTTSATILSLFINSDLLASHGHFPIEPSESKLDEIVDYIPGLSPTRLSDLQILHGYSHQVFNIFKKSFGELYKAKYLLFPSAYELEPKAIDFFTSKFDFPVYSTGPLIPLEELSVGNENRELDYFKWLDEQPESSVLYISQGSFLSVSEAQMEEIVVGVREAGVKFFWVARGGELKLKEALEGSLGVVVSWCDQLRVLCHAAIGGFWTHCGYNSTLEGICSGVPLLTFPVFWDQFLNAKMIVEEWRVGMGIERKKQMELLIVSDEIKELVKRFMDGESEEGKEMRRRTCDLSEICRGAVAKGGSSDANIDAFIKDITKIV.

Residues Ser263, 312 to 314, 329 to 337, and 351 to 354 contribute to the UDP-alpha-D-glucose site; these read CDQ, HCGYNSTLE, and FWDQ.

It belongs to the UDP-glycosyltransferase family.

This Arabidopsis thaliana (Mouse-ear cress) protein is UDP-glycosyltransferase 87A1 (UGT87A1).